Reading from the N-terminus, the 1362-residue chain is DNA-directed RNA polymerase subunit beta' (1362 aa).

A compositionally biased stretch (basic residues) spans 1–14 (MTSSSKSRKSKSSK). The segment at 1–39 (MTSSSKSRKSKSSKASKAAKEAPVSASRPLSKTPPPFRN) is disordered. The span at 15-27 (ASKAAKEAPVSAS) shows a compositional bias: low complexity. Zn(2+) is bound by residues Cys248, Cys315, Cys322, and Cys325. A disordered region spans residues 1316-1336 (TRHNIDPSASNFAAFTRPDAD).

Belongs to the RNA polymerase beta' chain family. RpoC2 subfamily. In cyanobacteria the RNAP catalytic core is composed of 2 alpha, 1 beta, 1 beta', 1 gamma and 1 omega subunit. When a sigma factor is associated with the core the holoenzyme is formed, which can initiate transcription. It depends on Zn(2+) as a cofactor.

It carries out the reaction RNA(n) + a ribonucleoside 5'-triphosphate = RNA(n+1) + diphosphate. DNA-dependent RNA polymerase catalyzes the transcription of DNA into RNA using the four ribonucleoside triphosphates as substrates. The protein is DNA-directed RNA polymerase subunit beta' of Synechococcus sp. (strain CC9605).